A 238-amino-acid polypeptide reads, in one-letter code: Octanoyltransferase (238 aa).

In terms of domain architecture, BPL/LPL catalytic spans 44 to 224 (AGGPDSLLLL…AVLDALDGRI (181 aa)). Substrate contacts are provided by residues 82–89 (RGGKITWH), 154–156 (AIG), and 167–169 (GFA). The active-site Acyl-thioester intermediate is Cys-185.

It belongs to the LipB family.

Its subcellular location is the cytoplasm. It catalyses the reaction octanoyl-[ACP] + L-lysyl-[protein] = N(6)-octanoyl-L-lysyl-[protein] + holo-[ACP] + H(+). Its pathway is protein modification; protein lipoylation via endogenous pathway; protein N(6)-(lipoyl)lysine from octanoyl-[acyl-carrier-protein]: step 1/2. Its function is as follows. Catalyzes the transfer of endogenously produced octanoic acid from octanoyl-acyl-carrier-protein onto the lipoyl domains of lipoate-dependent enzymes. Lipoyl-ACP can also act as a substrate although octanoyl-ACP is likely to be the physiological substrate. This is Octanoyltransferase from Mycolicibacterium gilvum (strain PYR-GCK) (Mycobacterium gilvum (strain PYR-GCK)).